Consider the following 156-residue polypeptide: ATP synthase subunit b (156 aa).

Residues 12–32 (VAFLIFVLFCMKYVWPPVITA) traverse the membrane as a helical segment.

It belongs to the ATPase B chain family. F-type ATPases have 2 components, F(1) - the catalytic core - and F(0) - the membrane proton channel. F(1) has five subunits: alpha(3), beta(3), gamma(1), delta(1), epsilon(1). F(0) has three main subunits: a(1), b(2) and c(10-14). The alpha and beta chains form an alternating ring which encloses part of the gamma chain. F(1) is attached to F(0) by a central stalk formed by the gamma and epsilon chains, while a peripheral stalk is formed by the delta and b chains.

The protein resides in the cell inner membrane. In terms of biological role, f(1)F(0) ATP synthase produces ATP from ADP in the presence of a proton or sodium gradient. F-type ATPases consist of two structural domains, F(1) containing the extramembraneous catalytic core and F(0) containing the membrane proton channel, linked together by a central stalk and a peripheral stalk. During catalysis, ATP synthesis in the catalytic domain of F(1) is coupled via a rotary mechanism of the central stalk subunits to proton translocation. Functionally, component of the F(0) channel, it forms part of the peripheral stalk, linking F(1) to F(0). In Pseudomonas putida (strain GB-1), this protein is ATP synthase subunit b.